Consider the following 125-residue polypeptide: Protein ApaG (125 aa).

One can recognise an ApaG domain in the interval 1–125 (MIEQPRICVQ…FRLAIPALIH (125 aa)).

The chain is Protein ApaG from Yersinia pseudotuberculosis serotype IB (strain PB1/+).